The chain runs to 352 residues: Glycerol-1-phosphate dehydrogenase [NAD(P)+] (352 aa).

NAD(+) contacts are provided by residues Gly-99–Asp-103 and Thr-121–Ser-124. Asp-126 contributes to the substrate binding site. Ser-130 is a binding site for NAD(+). Residue Asp-173 coordinates substrate. Zn(2+) contacts are provided by Asp-173 and His-253. Residue His-257 participates in substrate binding. His-269 provides a ligand contact to Zn(2+).

Belongs to the glycerol-1-phosphate dehydrogenase family. Zn(2+) serves as cofactor.

It localises to the cytoplasm. The enzyme catalyses sn-glycerol 1-phosphate + NAD(+) = dihydroxyacetone phosphate + NADH + H(+). It carries out the reaction sn-glycerol 1-phosphate + NADP(+) = dihydroxyacetone phosphate + NADPH + H(+). It participates in membrane lipid metabolism; glycerophospholipid metabolism. Functionally, catalyzes the NAD(P)H-dependent reduction of dihydroxyacetonephosphate (DHAP or glycerone phosphate) to glycerol 1-phosphate (G1P). The G1P thus generated is used as the glycerophosphate backbone of phospholipids in the cellular membranes of Archaea. The protein is Glycerol-1-phosphate dehydrogenase [NAD(P)+] of Thermoplasma volcanium (strain ATCC 51530 / DSM 4299 / JCM 9571 / NBRC 15438 / GSS1).